The primary structure comprises 1198 residues: Fibronectin type-III domain-containing protein 3a (1198 aa).

A compositionally biased stretch (basic and acidic residues) spans 189–201; the sequence is KLKDRHGTQKDKL. Residues 189–256 are disordered; sequence KLKDRHGTQK…SQTDVEIEEK (68 aa). Over residues 229–247 the composition is skewed to low complexity; sequence GISTGSTKSKSVGKGKSNS. Fibronectin type-III domains follow at residues 269-370, 374-466, 470-563, 567-661, 665-758, 762-852, 864-951, 952-1045, and 1046-1151; these read NIAK…TMSC, APNL…TSGT, TPAS…TCPD, APSK…TPAV, PCQP…TAPG, QCKP…TPAS, SEDE…TKPL, PPDP…TPKS, and VPAA…TEPP. The tract at residues 553–574 is disordered; sequence SETVDYTTCPDKPGAPSKPSVK. The helical transmembrane segment at 1172–1192 threads the bilayer; the sequence is VCAAVILALFAIFSILIAVII.

It belongs to the FNDC3 family.

The protein resides in the golgi apparatus membrane. This Gallus gallus (Chicken) protein is Fibronectin type-III domain-containing protein 3a (FNDC3A).